Consider the following 161-residue polypeptide: Lipoprotein signal peptidase (161 aa).

A run of 3 helical transmembrane segments spans residues 9–29, 64–84, and 96–113; these read WLWL…LVVE, WQKY…ANVL, and MAYA…IDRA. Active-site residues include Asp-120 and Asp-138. The helical transmembrane segment at 133–153 threads the bilayer; that stretch reads VFNIADVAIVMGAGLLILETF.

This sequence belongs to the peptidase A8 family.

It is found in the cell inner membrane. The enzyme catalyses Release of signal peptides from bacterial membrane prolipoproteins. Hydrolyzes -Xaa-Yaa-Zaa-|-(S,diacylglyceryl)Cys-, in which Xaa is hydrophobic (preferably Leu), and Yaa (Ala or Ser) and Zaa (Gly or Ala) have small, neutral side chains.. Its pathway is protein modification; lipoprotein biosynthesis (signal peptide cleavage). Functionally, this protein specifically catalyzes the removal of signal peptides from prolipoproteins. The protein is Lipoprotein signal peptidase of Haemophilus ducreyi (strain 35000HP / ATCC 700724).